A 517-amino-acid polypeptide reads, in one-letter code: Methionine aminopeptidase 1b (517 aa).

Residues 74–94 (YCNKENSNNNNNNNNNNNNNL) form a disordered region. The segment covering 79-94 (NSNNNNNNNNNNNNNL) has biased composition (low complexity). A C6H2-type zinc finger spans residues 114–166 (ENLCSGCKKVLIKKLSCPICLKNKIFSYFCNQECFKGSWKEHQKIHENMNKEN). Zn(2+)-binding residues include Cys117, Cys120, Cys130, Cys133, Cys143, Cys147, His155, and His159. A protein is bound at residue His325. Zn(2+)-binding residues include Asp342, Asp353, and His419. His426 contacts a protein. Residues Glu452 and Glu483 each contribute to the Zn(2+) site.

It belongs to the peptidase M24A family. Methionine aminopeptidase type 1 subfamily. Associates with the 60S ribosomal subunit of the 80S translational complex. Requires Zn(2+) as cofactor. Co(2+) serves as cofactor. Mn(2+) is required as a cofactor. The cofactor is Fe(2+).

It is found in the cytoplasm. It catalyses the reaction Release of N-terminal amino acids, preferentially methionine, from peptides and arylamides.. With respect to regulation, inhibited by pyrimidine derivative XC11. Cotranslationally removes the N-terminal methionine from nascent proteins. The N-terminal methionine is often cleaved when the second residue in the primary sequence is small and uncharged (Met-Ala-, Cys, Gly, Pro, Ser, Thr, or Val). May play an important role in parasite growth during the blood asexual stage. In Plasmodium falciparum (isolate 3D7), this protein is Methionine aminopeptidase 1b.